The following is an 891-amino-acid chain: MTLCNMNLYEFRQKYNYDVATKMMQQYLDIKFAHLDCLLLFRMGDFYELFYEDAILASNILGIALTKRGKNCEEEIPMCGVPYHALEHYLTKLITENYKVAICDQLETPEEAKKRGGYKAVVTRDVTRIITPGTIIEENLISAAEPNYLTSLVMTKNKKTASICYVDLSTSKIFIVNVPETEILNELARLKSREILLSENLKSSNLADSILKQFNCRITYQVDSFFAINKCEKIILDFYKIRDIKGIGEISSSQICAIGSILEYLSLTQKQNIPNLPIPKIINFHSYMTIDFSTRRNLEIVTNIQGNLHGSVLNTLNHTVTKQGGRLLYHFLSSPLTNIAKINRRLNITEFFYSNLGIVTRIRELLKNTSDIERCLTRITMNRSSGRDLLSIKYTLETAKIINGLFSESHSLNLPNFIGKIIKPLSGDAELYNLIDMSIREDAPNNLNDGGIIKHEFHPKVAQLNDLINNGKLHVEKLKDQYRKETGIDSLKISHNNVLGLFIDITAKNVNKILDPKFIHRQTTVNSVRYTTYELQNLENELVNAQTLVISLEKELYTDICRKVIEKSSYLRILANSLSGLDVFCNFAYIADEYNYTKPEFTNDLSFDIVKGRHPVVEAALLKTSKSFVYNDCHLSEAERICLITGPNMAGKSTYLRQNAIITIIAQIGSFVPAKSAKIGVVDKIFSRIGAADDLIKGQSTFMAEMLETSAILAQSTKNSLIILDEVGRGTSTYDGVSIAWSVLEYIHDKLKCRCLFATHYHELTVMKNFLPALQNYTIAIEESGKDILFLHNIILGTSNKSYGLHVAALAGLPTSVINRAAQILLKFEKISISKGKNIVSTASNNLSLFNFEPQKHISNSKLDEEFKTIDPDKISPKEALELIYKFKKLV.

646–653 (GPNMAGKS) provides a ligand contact to ATP.

Belongs to the DNA mismatch repair MutS family.

In terms of biological role, this protein is involved in the repair of mismatches in DNA. It is possible that it carries out the mismatch recognition step. This protein has a weak ATPase activity. The protein is DNA mismatch repair protein MutS of Rickettsia typhi (strain ATCC VR-144 / Wilmington).